The following is a 324-amino-acid chain: D-alanine--D-alanine ligase (324 aa).

Residues Asn121 to Glu321 form the ATP-grasp domain. Val149 to Thr204 contributes to the ATP binding site. Mg(2+) contacts are provided by Asp275, Glu288, and Asn290.

The protein belongs to the D-alanine--D-alanine ligase family. Mg(2+) serves as cofactor. It depends on Mn(2+) as a cofactor.

It localises to the cytoplasm. It catalyses the reaction 2 D-alanine + ATP = D-alanyl-D-alanine + ADP + phosphate + H(+). Its pathway is cell wall biogenesis; peptidoglycan biosynthesis. Its function is as follows. Cell wall formation. This chain is D-alanine--D-alanine ligase, found in Bacteroides fragilis (strain ATCC 25285 / DSM 2151 / CCUG 4856 / JCM 11019 / LMG 10263 / NCTC 9343 / Onslow / VPI 2553 / EN-2).